Consider the following 240-residue polypeptide: 2,3-bisphosphoglycerate-dependent phosphoglycerate mutase 2 (240 aa).

Residues 8–15, 21–22, Arg60, 87–90, Lys98, 114–115, and 183–184 contribute to the substrate site; these read RHGQSEWN, TG, ERHY, RR, and GN. His9 (tele-phosphohistidine intermediate) is an active-site residue. The active-site Proton donor/acceptor is Glu87.

This sequence belongs to the phosphoglycerate mutase family. BPG-dependent PGAM subfamily.

The enzyme catalyses (2R)-2-phosphoglycerate = (2R)-3-phosphoglycerate. The protein operates within carbohydrate degradation; glycolysis; pyruvate from D-glyceraldehyde 3-phosphate: step 3/5. Functionally, catalyzes the interconversion of 2-phosphoglycerate and 3-phosphoglycerate. This chain is 2,3-bisphosphoglycerate-dependent phosphoglycerate mutase 2, found in Bacillus cereus (strain ATCC 10987 / NRS 248).